Consider the following 480-residue polypeptide: MGLRLTTKVQVSGWRFLLRRLEHAIVRRDTRMFDDPLQFYSRSIALGIVVAVLILAGAALLAYFKPQGKLGGTSLFTDRATNQLYVLLSGQLHPVYNLTSARLVLGNPANPATVKSSELSKLPMGQTVGIPGAPYATPVSAGSTSIWTLCDTVARADSTSPVVQTAVIAMPLEIDASIDPLQSHEAVLVSYQGETWIVTTKGRHAIDLTDRALTSSMGIPVTARPTPISEGMFNALPDMGPWQLPPIPAAGAPNSLGLPDDLVIGSVFQIHTDKGPQYYVVLPDGIAQVNATTAAALRATQAHGLVAPPAMVPSLVVRIAERVYPSPLPDEPLKIVSRPQDPALCWSWQRSAGDQSPQSTVLSGRHLPISPSAMNMGIKQIHGTATVYLDGGKFVALQSPDPRYTESMYYIDPQGVRYGVPNAETAKSLGLSSPQNAPWEIVRLLVDGPVLSKDAALLEHDTLPADPSPRKVPAGASGAP.

A helical transmembrane segment spans residues 44–64 (IALGIVVAVLILAGAALLAYF). The segment at 461–480 (DTLPADPSPRKVPAGASGAP) is disordered.

Belongs to the EccB family. In terms of assembly, part of the ESX-1 / type VII secretion system (T7SS), which is composed of cytosolic and membrane components. The ESX-1 membrane complex is composed of EccB1, EccCa1, EccCb1, EccD1 and EccE1.

The protein localises to the cell inner membrane. Functionally, an ATPase. Part of the ESX-1 specialized secretion system, which delivers several virulence factors to host cells during infection, including the key virulence factors EsxA (ESAT-6) and EsxB (CFP-10). This Mycobacterium tuberculosis (strain CDC 1551 / Oshkosh) protein is ESX-1 secretion system ATPase EccB1.